The following is a 541-amino-acid chain: Formimidoyltransferase-cyclodeaminase (541 aa).

Residues 1–181 (MAKLVECVPN…GATVTGARTF (181 aa)) form a formiminotransferase N-subdomain region. His-82 functions as the For formimidoyltransferase activity in the catalytic mechanism. Residue 163 to 172 (GPPAFVPQWG) coordinates folate. Residues 182-326 (LIAYNINLLC…PRERIIEYLV (145 aa)) are formiminotransferase C-subdomain. Positions 327–334 (QAGQEDKG) are linker. Positions 335-541 (LVTKPLGAFV…VLALLEKREA (207 aa)) are cyclodeaminase/cyclohydrolase. Residue Asp-412 is the For cyclodeaminase activity of the active site.

The protein in the C-terminal section; belongs to the cyclodeaminase/cyclohydrolase family. In the N-terminal section; belongs to the formiminotransferase family. As to quaternary structure, homooctamer, including four polyglutamate binding sites. The subunits are arranged as a tetramer of dimers, and form a planar ring-shaped structure.

It is found in the cytoplasm. It localises to the cytosol. The protein resides in the golgi apparatus. The protein localises to the cytoskeleton. Its subcellular location is the microtubule organizing center. It is found in the centrosome. It localises to the centriole. The enzyme catalyses 5-formimidoyltetrahydrofolate + L-glutamate = N-formimidoyl-L-glutamate + (6S)-5,6,7,8-tetrahydrofolate. It carries out the reaction 5-formimidoyltetrahydrofolate + 2 H(+) = (6R)-5,10-methenyltetrahydrofolate + NH4(+). The protein operates within amino-acid degradation; L-histidine degradation into L-glutamate; L-glutamate from N-formimidoyl-L-glutamate (transferase route): step 1/1. Functionally, folate-dependent enzyme, that displays both transferase and deaminase activity. Serves to channel one-carbon units from formiminoglutamate to the folate pool. In terms of biological role, binds and promotes bundling of vimentin filaments originating from the Golgi. This chain is Formimidoyltransferase-cyclodeaminase (FTCD), found in Gallus gallus (Chicken).